A 172-amino-acid chain; its full sequence is Peptide methionine sulfoxide reductase MsrA (172 aa).

Cys-12 is a catalytic residue.

The protein belongs to the MsrA Met sulfoxide reductase family.

The enzyme catalyses L-methionyl-[protein] + [thioredoxin]-disulfide + H2O = L-methionyl-(S)-S-oxide-[protein] + [thioredoxin]-dithiol. It carries out the reaction [thioredoxin]-disulfide + L-methionine + H2O = L-methionine (S)-S-oxide + [thioredoxin]-dithiol. Functionally, has an important function as a repair enzyme for proteins that have been inactivated by oxidation. Catalyzes the reversible oxidation-reduction of methionine sulfoxide in proteins to methionine. This chain is Peptide methionine sulfoxide reductase MsrA, found in Ligilactobacillus salivarius (strain UCC118) (Lactobacillus salivarius).